The chain runs to 450 residues: Sorting nexin-4 (450 aa).

Met-1 is modified (N-acetylmethionine). The tract at residues 1-46 is disordered; it reads MEQAPPDPEKLLQPGPLEPLGGPGAVLEAAVGEENEGTREDGSGVD. Residues 11 to 20 are compositionally biased toward low complexity; that stretch reads LLQPGPLEPL. The PX domain maps to 61-187; it reads SVSEAEKRTG…YSFLTQEGNW (127 aa). A 1,2-diacyl-sn-glycero-3-phospho-(1D-myo-inositol-3-phosphate) is bound by residues Arg-106, Ser-108, Lys-132, and Arg-154.

Belongs to the sorting nexin family. Heterodimer; heterodimerizes with SNX7 or SNX30. Interacts with WWC1/KIBRA. Identified in a complex with WWC1/KIBRA and dynein components DYNLL1 and DYNC1I2. Interacts with BIN1.

The protein resides in the early endosome. Its subcellular location is the early endosome membrane. In terms of biological role, involved in the regulation of endocytosis and in several stages of intracellular trafficking. Plays a role in recycling endocytosed transferrin receptor and prevent its degradation. Involved in autophagosome assembly by regulating trafficking and recycling of phospholipid scramblase ATG9A. This is Sorting nexin-4 from Mus musculus (Mouse).